Here is a 316-residue protein sequence, read N- to C-terminus: 4-hydroxy-3-methylbut-2-enyl diphosphate reductase (316 aa).

Cysteine 12 lines the [4Fe-4S] cluster pocket. 2 residues coordinate (2E)-4-hydroxy-3-methylbut-2-enyl diphosphate: histidine 41 and histidine 74. 2 residues coordinate dimethylallyl diphosphate: histidine 41 and histidine 74. Residues histidine 41 and histidine 74 each coordinate isopentenyl diphosphate. Residue cysteine 96 participates in [4Fe-4S] cluster binding. Histidine 124 is a (2E)-4-hydroxy-3-methylbut-2-enyl diphosphate binding site. Histidine 124 provides a ligand contact to dimethylallyl diphosphate. Histidine 124 is a binding site for isopentenyl diphosphate. Glutamate 126 (proton donor) is an active-site residue. Threonine 168 provides a ligand contact to (2E)-4-hydroxy-3-methylbut-2-enyl diphosphate. Cysteine 198 contacts [4Fe-4S] cluster. The (2E)-4-hydroxy-3-methylbut-2-enyl diphosphate site is built by serine 226, serine 227, asparagine 228, and serine 270. Dimethylallyl diphosphate is bound by residues serine 226, serine 227, asparagine 228, and serine 270. Residues serine 226, serine 227, asparagine 228, and serine 270 each coordinate isopentenyl diphosphate.

It belongs to the IspH family. The cofactor is [4Fe-4S] cluster.

It carries out the reaction isopentenyl diphosphate + 2 oxidized [2Fe-2S]-[ferredoxin] + H2O = (2E)-4-hydroxy-3-methylbut-2-enyl diphosphate + 2 reduced [2Fe-2S]-[ferredoxin] + 2 H(+). It catalyses the reaction dimethylallyl diphosphate + 2 oxidized [2Fe-2S]-[ferredoxin] + H2O = (2E)-4-hydroxy-3-methylbut-2-enyl diphosphate + 2 reduced [2Fe-2S]-[ferredoxin] + 2 H(+). Its pathway is isoprenoid biosynthesis; dimethylallyl diphosphate biosynthesis; dimethylallyl diphosphate from (2E)-4-hydroxy-3-methylbutenyl diphosphate: step 1/1. The protein operates within isoprenoid biosynthesis; isopentenyl diphosphate biosynthesis via DXP pathway; isopentenyl diphosphate from 1-deoxy-D-xylulose 5-phosphate: step 6/6. Catalyzes the conversion of 1-hydroxy-2-methyl-2-(E)-butenyl 4-diphosphate (HMBPP) into a mixture of isopentenyl diphosphate (IPP) and dimethylallyl diphosphate (DMAPP). Acts in the terminal step of the DOXP/MEP pathway for isoprenoid precursor biosynthesis. This Acinetobacter baumannii (strain AB307-0294) protein is 4-hydroxy-3-methylbut-2-enyl diphosphate reductase.